The primary structure comprises 396 residues: Elongation factor Tu (396 aa).

The tr-type G domain occupies 10–206; it reads KPHVNVGTIG…ALDSYIPEPT (197 aa). The segment at 19-26 is G1; it reads GHVDHGKT. A GTP-binding site is contributed by 19–26; the sequence is GHVDHGKT. Residue Thr-26 participates in Mg(2+) binding. Residues 60 to 64 form a G2 region; it reads GITIS. The G3 stretch occupies residues 81–84; the sequence is DCPG. GTP-binding positions include 81–85 and 136–139; these read DCPGH and NKAD. The tract at residues 136-139 is G4; sequence NKAD. The G5 stretch occupies residues 174-176; the sequence is SAL.

It belongs to the TRAFAC class translation factor GTPase superfamily. Classic translation factor GTPase family. EF-Tu/EF-1A subfamily. Monomer.

Its subcellular location is the cytoplasm. The catalysed reaction is GTP + H2O = GDP + phosphate + H(+). Functionally, GTP hydrolase that promotes the GTP-dependent binding of aminoacyl-tRNA to the A-site of ribosomes during protein biosynthesis. This chain is Elongation factor Tu, found in Hydrogenovibrio crunogenus (strain DSM 25203 / XCL-2) (Thiomicrospira crunogena).